The sequence spans 379 residues: Lipid-A-disaccharide synthase (379 aa).

Belongs to the LpxB family.

The catalysed reaction is a lipid X + a UDP-2-N,3-O-bis[(3R)-3-hydroxyacyl]-alpha-D-glucosamine = a lipid A disaccharide + UDP + H(+). It participates in bacterial outer membrane biogenesis; LPS lipid A biosynthesis. Functionally, condensation of UDP-2,3-diacylglucosamine and 2,3-diacylglucosamine-1-phosphate to form lipid A disaccharide, a precursor of lipid A, a phosphorylated glycolipid that anchors the lipopolysaccharide to the outer membrane of the cell. The protein is Lipid-A-disaccharide synthase of Pseudomonas fluorescens (strain SBW25).